A 94-amino-acid polypeptide reads, in one-letter code: Co-chaperonin GroES (94 aa).

This sequence belongs to the GroES chaperonin family. As to quaternary structure, heptamer of 7 subunits arranged in a ring. Interacts with the chaperonin GroEL.

It is found in the cytoplasm. Functionally, together with the chaperonin GroEL, plays an essential role in assisting protein folding. The GroEL-GroES system forms a nano-cage that allows encapsulation of the non-native substrate proteins and provides a physical environment optimized to promote and accelerate protein folding. GroES binds to the apical surface of the GroEL ring, thereby capping the opening of the GroEL channel. In Brevibacillus choshinensis, this protein is Co-chaperonin GroES.